Reading from the N-terminus, the 139-residue chain is Actin-depolymerizing factor 3 (139 aa).

Residues 5 to 139 (ASGMAVHDDC…DLDVFKSRAN (135 aa)) enclose the ADF-H domain. Serine 6 bears the Phosphoserine mark.

The protein belongs to the actin-binding proteins ADF family.

The protein resides in the cytoplasm. The protein localises to the cytoskeleton. Its function is as follows. Actin-depolymerizing protein. Severs actin filaments (F-actin) and binds to actin monomers. This is Actin-depolymerizing factor 3 (ADF3) from Arabidopsis thaliana (Mouse-ear cress).